An 865-amino-acid chain; its full sequence is DNA-directed RNA polymerase subunit Rpo1N (865 aa).

Zn(2+)-binding residues include cysteine 60, cysteine 63, cysteine 70, histidine 73, cysteine 100, cysteine 103, cysteine 146, and cysteine 149. Aspartate 451, aspartate 453, and aspartate 455 together coordinate Mg(2+). The disordered stretch occupies residues 500 to 531 (EHTSSQGKRLFSVRSRPPDPQEGRAPPPDREG). A compositionally biased stretch (basic and acidic residues) spans 515 to 531 (RPPDPQEGRAPPPDREG).

This sequence belongs to the RNA polymerase beta' chain family. As to quaternary structure, part of the RNA polymerase complex. Requires Mg(2+) as cofactor. Zn(2+) is required as a cofactor.

It is found in the cytoplasm. The enzyme catalyses RNA(n) + a ribonucleoside 5'-triphosphate = RNA(n+1) + diphosphate. Its function is as follows. DNA-dependent RNA polymerase (RNAP) catalyzes the transcription of DNA into RNA using the four ribonucleoside triphosphates as substrates. Forms the clamp head domain. In Methanothermobacter thermautotrophicus (strain Winter) (Methanobacterium thermoautotrophicum), this protein is DNA-directed RNA polymerase subunit Rpo1N.